The chain runs to 597 residues: MKNIRNFSIIAHIDHGKSTLSDRFIQVCNGLSEREMKEQVLDSMDIERERGITIKAQSVTLDYTARDGQTYQLNFIDTPGHVDFSYEVSRSLAACEGALLVVDAAQGVEAQTVANCYTAIEQNLEVIPILNKIDLPSAEPDRVAQEIEEIIGIDATGATTCSAKIGIGVEDVLETIVAKVPAPEGDVNAKLQALIIDSWFDNYLGVVSLVRVKNGTIKKGEKFKVMSTGVAYQVDRLGVFTPKMKDLDHLKAGEVGFIVAGIKDIHGAPVGDTLTHAHNPTDKPVPGFKKVQPQVYAGMFTISSDNYPDFREALEKLSLNDASLFFEPEVSQALGFGFRCGFLGMLHMEIIQERLEREYNLDLITSAPTVVYKAIKKDGEIIEVDNLSKLPEPGAIAEIQEPIVRANILVPKDYVGSVITICIEKRGVQVDLNYVGNQVSITYDLPMIEVVSDFFDTLKSVTKGYGSLDYELIRYEPANMVCLDVLINGDKVDALASIVHKDQAKYKGRELVERLKELIPRQMFEVAIQAAIGGTIVARSTVKALRKNVLAKCYGGDVSRKKKLLEKQKEGKKRMKNIGSVEIPQEAFLSVLKKIKL.

Residues 2–184 form the tr-type G domain; the sequence is KNIRNFSIIA…TIVAKVPAPE (183 aa). Residues 14–19 and 131–134 each bind GTP; these read DHGKST and NKID.

The protein belongs to the TRAFAC class translation factor GTPase superfamily. Classic translation factor GTPase family. LepA subfamily.

The protein localises to the cell inner membrane. The enzyme catalyses GTP + H2O = GDP + phosphate + H(+). In terms of biological role, required for accurate and efficient protein synthesis under certain stress conditions. May act as a fidelity factor of the translation reaction, by catalyzing a one-codon backward translocation of tRNAs on improperly translocated ribosomes. Back-translocation proceeds from a post-translocation (POST) complex to a pre-translocation (PRE) complex, thus giving elongation factor G a second chance to translocate the tRNAs correctly. Binds to ribosomes in a GTP-dependent manner. The protein is Elongation factor 4 of Francisella tularensis subsp. mediasiatica (strain FSC147).